Consider the following 130-residue polypeptide: Capsid protein (130 aa).

Residues 32–105 (EWISSNSRSQ…FATNSDCELI (74 aa)) form a viral RNA-binding region.

It belongs to the Leviviricetes capsid protein family. As to quaternary structure, homodimer. The capsid proteins form dimers that assemble by group of 5. Twelve such pentamers are linked together with free dimers. The homodimers binds to the viral RNA via an operator hairpin, but also to many other RNA sequences in the viral genome; this interaction probably shifts the virus from the replicative to the assembly phase and ensures specific encapsidation of the viral genome.

It is found in the virion. In terms of biological role, capsid protein self-assembles to form an icosahedral capsid with a T=3 symmetry, about 26 nm in diameter, and consisting of 89 capsid proteins dimers (178 capsid proteins). Involved in viral genome encapsidation through the interaction between a capsid protein dimer and the multiple packaging signals present in the RNA genome. The capsid also contains 1 copy of the A2 maturation protein. Functionally, acts as a translational repressor of viral replicase synthesis late in infection. This latter function is the result of capsid protein interaction with an RNA hairpin which contains the replicase ribosome-binding site. This is Capsid protein from Enterobacteria phage ZR (Bacteriophage ZR).